The following is a 283-amino-acid chain: Bifunctional protein FolD (283 aa).

166–168 (GAS) contributes to the NADP(+) binding site.

This sequence belongs to the tetrahydrofolate dehydrogenase/cyclohydrolase family. As to quaternary structure, homodimer.

The catalysed reaction is (6R)-5,10-methylene-5,6,7,8-tetrahydrofolate + NADP(+) = (6R)-5,10-methenyltetrahydrofolate + NADPH. It carries out the reaction (6R)-5,10-methenyltetrahydrofolate + H2O = (6R)-10-formyltetrahydrofolate + H(+). It functions in the pathway one-carbon metabolism; tetrahydrofolate interconversion. Functionally, catalyzes the oxidation of 5,10-methylenetetrahydrofolate to 5,10-methenyltetrahydrofolate and then the hydrolysis of 5,10-methenyltetrahydrofolate to 10-formyltetrahydrofolate. The protein is Bifunctional protein FolD of Coxiella burnetii (strain CbuK_Q154) (Coxiella burnetii (strain Q154)).